The sequence spans 246 residues: Envelope glycoprotein gp95 (246 aa).

Residues 1–192 are Extracellular-facing; that stretch reads IPSRPVGGPC…EWAVHLLKGL (192 aa). Asn-31 carries an N-linked (GlcNAc...) asparagine; by host glycan. A disulfide bridge links Cys-50 with Cys-86. Residues 58–78 form a fusion peptide region; it reads GPTARIFASILAPGVAAAQAL. Residues 75-125 adopt a coiled-coil conformation; it reads AQALREIERLACWSVKQANLTTSLLGDLLDDVTSIRHAVLQNRAAIDFLLL. An N-linked (GlcNAc...) asparagine; by host glycan is attached at Asn-93. Residues 114–130 form an immunosuppression region; sequence LQNRAAIDFLLLAHGHG. The cysteines at positions 131 and 138 are disulfide-linked. An N-linked (GlcNAc...) asparagine; by host glycan is attached at Asn-141. Residues 143-173 adopt a coiled-coil conformation; that stretch reads SDQSESIQKKFQLMKEHVNKIGVDSDLIGSW. A helical transmembrane segment spans residues 193 to 213; that stretch reads LLGLVVILLLVVCLPCLLQML. 2 S-palmitoyl cysteine; by host lipidation sites follow: Cys-205 and Cys-208. Topologically, residues 214 to 246 are cytoplasmic; it reads CGNRRKMINNSISYHTEYKKLQKACGQPESRIV.

The protein belongs to the Alpharetroviruses envelope glycoprotein family. In terms of assembly, heterodimer with the transmembrane protein. The mature envelope protein (Env) consists of a trimer of SU-TM heterodimers attached by a labile interchain disulfide bond. Interacts with the host cell entry receptor TVA isoforms pg900 and pg800; this interaction allows the viral attachment. Heterodimer with the surface protein. The mature envelope protein (Env) consists of a trimer of SU-TM heterodimers attached by a labile interchain disulfide bond. Post-translationally, specific enzymatic cleavages in vivo yield mature proteins. Envelope glycoproteins are synthesized as an inactive precursor that is N-glycosylated and processed likely by host cell furin or by a furin-like protease in the Golgi to yield the mature SU and TM proteins. The cleavage site between SU and TM requires the minimal sequence [KR]-X-[KR]-R. In terms of processing, the transmembrane protein is palmitoylated. Palmitoylation is necessary for glycoprotein function and infectivity.

The protein resides in the virion membrane. The protein localises to the host cell membrane. Its function is as follows. The surface protein (SU) attaches the virus to the host cell entry receptor TVA. This interaction triggers the refolding of the transmembrane protein (TM) thereby unmasking its fusion peptide and the formation of a reactive thiolate to activate its fusogenic potential. Fusion occurs at the host cell plasma membrane. Functionally, the transmembrane protein (TM) acts as a class I viral fusion protein. Under the current model, the protein has at least 3 conformational states: pre-fusion native state, pre-hairpin intermediate state, and post-fusion hairpin state. During viral and target cell membrane fusion, the coiled coil regions (heptad repeats) assume a trimer-of-hairpins structure, positioning the fusion peptide in close proximity to the C-terminal region of the ectodomain. The formation of this structure appears to drive apposition and subsequent fusion of viral and target cell membranes. Membranes fusion leads to delivery of the nucleocapsid into the cytoplasm. The chain is Envelope glycoprotein gp95 (env) from Rous sarcoma virus subgroup A (strain Schmidt-Ruppin) (RSV-SR-A).